Consider the following 1723-residue polypeptide: METIVNNQNNGQQNTVPTQSFSSSVYMNYDFFDSQQLQQPQHQPQHYQQQDSFVSPNLDNNNPQIHVQSNNYNQNGFVGYNNSNNNNNNNQHMNNQYSNSFHNNNSSGFMAFQNNSSNFNNQNNNNSNNNNNNNNINSYDYNNSNNNNYNNNNNTHSNNSNNNNNNNNSNYWNNNNNNNNNNNNNNNNNNNNNNNNNNNNNSNNNNNNNNNNNHHHHHHQQQSQPTSPYNNPIQHNPNDMKFNGQHNPFNGNQMVMDNNNNNNNNNNSNVFNSNSNSNVFNSNSGSFLQINNNNGSFSSYNNNNNNNNNNNSNSNNNNNNNNNNNNNNNNNNNNNNNNNNNNNSNNNNNNQFSQSYDSTLGNNRFSSMMGQPIQQQQSPPQQQQQQSFIQSSPQAIPASNCNGNGSTSSSTSPLSPTLIGSAPGTPTSMLATTLFGFNLSSSPTSSPSSPVKKGKSQSALALSSSGGSGGSSGRKKPQKHDSMSSITNTNLKSTQASTLKESKRSNSSPNLKKQMQLQQLQQQQKLNENGTLIPPLPFASISENITNNNNNNNNNNNNNNNNNNNNNITNNPLSGSMEFPNSNNINQSSDSINGEFNIGQPESPKMYNSSPSPPPNATSTTKGGKKSKKSLHISTTQQSPSLNGSTGGSMLTPTMSGLSLSGGGSGGGFSPLISPTGTTSNKDLQSSPSPSPLLKSMSMGKLDLQDSIDSMSSPLSPNSSLSSSNGLLPPPPNSNNMNSSGGIPTPSTPTSPPPLTHHINIFSNLEFVKQLKDHLLPNDFKPEEHALERNLLRFQQFVKTLAEPLQRDVVTSMFELSVDAQLQYGSNLDNDNLSALMLFRRKILNFNLFRMMMLNDPNSFIPLPSPFPIQTTTISSNGTIVNPTNVNNNNINNNNNNNNNNNNNNNNNNNNNNNNNNNNTTTTTTTTTSANTVQSGTTSNSNLVFQQTSNSNTLSPSQQQQQQTQQQQSINGSSTGSLSDAQYQDLGIHLDTSSANSGCGINVSIGSSIGGGGGGSSLNGSNLNGSSSISGSISGGSSNGGGQFIMSPQFSLDGAYQQQQPSSYNINNEMELAEKDEDEIFNNNNKDNNNNNNNNNNNNNNNNNNNNNNNNNNNNNNSSSINSNINNVNNCNINNNSNSNNGSINSPRPSTPTTLNSSGKRSKKIYRGDSFGAGNDISTGLMASSDQIIPPPQQQQHQQLVNNNNNNMNNSENNILLADSNKGLSVSLGSLPTNTPSSMEIEQQQQQQQQQQQQQQQQHLNQQQILHQQLHHHLSSSLGGAQFTNIQQQQQQQSGNIFYNSPYNSSQVYMNPYGTSITNTSLAGPSTTSSAMQHMITNMTSSNIIVNNQNNNNNDQNNNNNNNNNNNSTTNSNVNNNNNTTNTPSSPPQPNNCTPTQTSIITSNGVVVPSLQMRGTITNPPPVLPTPDTLVLQQQQQQQQQQQQQQQQQQQQQQQQQQQQQQETPHTPTSNSISSPRSSPVHQQSPSNTNTTTTSTTTIRHSAVTQLSFAGLHNQQVSPISPRSPRSPHGTSGDYNDGSQSPSSRRKNRFTDFQIKRMNDCFENLDKNNNGKFTSEEICQIATELGLTDQQVRVFFQNKRARSRPSPRGQPTNPLTSSTNNGNNSNLALQHLQQQHLQQVQQQQQQLLQLQQQQQQQQQQLHQQSANTTPQLNSMNPNSINYNNNNNNNNNNNNNNNNNNNNNNNNNNNNNNIINNNITTINE.

A compositionally biased stretch (low complexity) spans 36–50 (QLQQPQHQPQHYQQQ). Disordered stretches follow at residues 36 to 425 (QLQQ…APGT), 440 to 522 (SSSP…QLQQ), 543 to 756 (ENIT…PPLT), 878 to 978 (GTIV…TGSL), 1080 to 1214 (IFNN…SENN), 1226 to 1264 (VSLG…NQQQ), 1345 to 1399 (IVNN…TQTS), 1456 to 1498 (QQQQ…STTT), and 1513 to 1547 (HNQQ…SRRK). The segment covering 51–72 (DSFVSPNLDNNNPQIHVQSNNY) has biased composition (polar residues). Composition is skewed to low complexity over residues 73–107 (NQNG…NNSS) and 114–212 (NNSS…NNNN). Composition is skewed to polar residues over residues 223–237 (SQPT…QHNP) and 244–257 (GQHN…MVMD). 2 stretches are compositionally biased toward low complexity: residues 258–284 (NNNN…NSNS) and 291–350 (NNNN…NNNN). Residues 300 to 351 (YNNNNNNNNNNNSNSNNNNNNNNNNNNNNNNNNNNNNNNNNNNNSNNNNNNQ) are a coiled coil. Over residues 351–369 (QFSQSYDSTLGNNRFSSMM) the composition is skewed to polar residues. 2 stretches are compositionally biased toward low complexity: residues 371–421 (QPIQ…LIGS) and 440–465 (SSSP…LSSS). Positions 483–510 (MSSITNTNLKSTQASTLKESKRSNSSPN) are enriched in polar residues. Low complexity-rich tracts occupy residues 511-522 (LKKQMQLQQLQQ), 544-571 (NITN…ITNN), and 581-593 (NSNN…DSIN). A compositionally biased stretch (polar residues) spans 632 to 655 (HISTTQQSPSLNGSTGGSMLTPTM). A compositionally biased stretch (gly residues) spans 660–669 (LSGGGSGGGF). Residues 673–685 (ISPTGTTSNKDLQ) are compositionally biased toward polar residues. Low complexity-rich tracts occupy residues 686–699 (SSPS…SMSM), 710–727 (SMSS…SNGL), and 734–745 (SNNMNSSGGIPT). Pro residues predominate over residues 746-755 (PSTPTSPPPL). Positions 882–928 (NPTNVNNNNINNNNNNNNNNNNNNNNNNNNNNNNNNNNTTTTTTTTT) are enriched in low complexity. Residues 929–945 (SANTVQSGTTSNSNLVF) show a composition bias toward polar residues. Composition is skewed to low complexity over residues 946-977 (QQTS…STGS) and 1082-1146 (NNNN…SINS). Polar residues-rich tracts occupy residues 1147–1159 (PRPS…NSSG) and 1176–1187 (DISTGLMASSDQ). The stretch at 1193 to 1270 (QQQQHQQLVN…NQQQILHQQL (78 aa)) forms a coiled coil. Over residues 1194–1214 (QQQHQQLVNNNNNNMNNSENN) the composition is skewed to low complexity. Over residues 1226–1242 (VSLGSLPTNTPSSMEIE) the composition is skewed to polar residues. Composition is skewed to low complexity over residues 1243-1264 (QQQQ…NQQQ), 1347-1384 (NNQN…TNTP), 1456-1480 (QQQQ…RSSP), 1487-1498 (SNTNTTTTSTTT), and 1518-1528 (SPISPRSPRSP). Residues 1431-1464 (VLQQQQQQQQQQQQQQQQQQQQQQQQQQQQQQET) adopt a coiled-coil conformation. The span at 1529–1543 (HGTSGDYNDGSQSPS) shows a compositional bias: polar residues. A DNA-binding region (homeobox) is located at residues 1543–1607 (SSRRKNRFTD…NKRARSRPSP (65 aa)). Residues 1553–1588 (FQIKRMNDCFENLDKNNNGKFTSEEICQIATELGLT) enclose the EF-hand domain. Disordered regions lie at residues 1598-1625 (NKRA…GNNS) and 1661-1723 (LHQQ…TINE). Residues 1612–1625 (TNPLTSSTNNGNNS) are compositionally biased toward low complexity. The stretch at 1632–1702 (LQQQHLQQVQ…NNNNNNNNNN (71 aa)) forms a coiled coil. Positions 1665–1675 (SANTTPQLNSM) are enriched in polar residues. A compositionally biased stretch (low complexity) spans 1676–1723 (NPNSINYNNNNNNNNNNNNNNNNNNNNNNNNNNNNNNIINNNITTINE).

It localises to the nucleus. Putative transcription factor. This Dictyostelium discoideum (Social amoeba) protein is Homeobox protein 5 (hbx5-1).